Consider the following 89-residue polypeptide: MTLANIKSAKKRAIQSEKRRQHNASQRSMMRTYIKKVYAAVAAGDKSVAEKAFVEMQKVVDRMASKGLIHANKAANHKANLSAQIKKLA.

The interval Met-1–Ser-28 is disordered.

This sequence belongs to the bacterial ribosomal protein bS20 family.

Binds directly to 16S ribosomal RNA. The polypeptide is Small ribosomal subunit protein bS20 (Pasteurella multocida (strain Pm70)).